The chain runs to 369 residues: Aminomethyltransferase (369 aa).

This sequence belongs to the GcvT family. As to quaternary structure, the glycine cleavage system is composed of four proteins: P, T, L and H.

The catalysed reaction is N(6)-[(R)-S(8)-aminomethyldihydrolipoyl]-L-lysyl-[protein] + (6S)-5,6,7,8-tetrahydrofolate = N(6)-[(R)-dihydrolipoyl]-L-lysyl-[protein] + (6R)-5,10-methylene-5,6,7,8-tetrahydrofolate + NH4(+). In terms of biological role, the glycine cleavage system catalyzes the degradation of glycine. In Xanthomonas axonopodis pv. citri (strain 306), this protein is Aminomethyltransferase.